Reading from the N-terminus, the 100-residue chain is Large ribosomal subunit protein uL23 (100 aa).

This sequence belongs to the universal ribosomal protein uL23 family. Part of the 50S ribosomal subunit. Contacts protein L29, and trigger factor when it is bound to the ribosome.

Its function is as follows. One of the early assembly proteins it binds 23S rRNA. One of the proteins that surrounds the polypeptide exit tunnel on the outside of the ribosome. Forms the main docking site for trigger factor binding to the ribosome. This chain is Large ribosomal subunit protein uL23, found in Buchnera aphidicola subsp. Acyrthosiphon pisum (strain 5A).